Here is a 574-residue protein sequence, read N- to C-terminus: Craniofacial development protein 2 (574 aa).

5 stretches are compositionally biased toward basic and acidic residues: residues 1 to 16, 23 to 37, 45 to 55, 86 to 111, and 134 to 172; these read MEEV…KAED, ECHE…KEDE, EQTKGIKRKAE, SEKE…KEDE, and TGEE…DRQQ. 2 disordered regions span residues 1 to 222 and 488 to 574; these read MEEV…PAVD and TRPF…SGVF. Over residues 199–208 the composition is skewed to polar residues; sequence KTGTNASSKN. Residues 493-572 are hydrophilic; the sequence is GTNEADDTSE…AVPSLPAGSG (80 aa). Basic and acidic residues predominate over residues 502-516; it reads EESKPSSEQKGKEKP. The span at 518–528 shows a compositional bias: low complexity; that stretch reads ASVPSAVSSVP.

The protein resides in the cytoplasm. The protein localises to the nucleus. In Tragulus javanicus (Lesser Malay chevrotain), this protein is Craniofacial development protein 2 (CFDP2).